The sequence spans 72 residues: Alpha-elapitoxin-Dv2b (72 aa).

5 disulfides stabilise this stretch: Cys3-Cys21, Cys14-Cys42, Cys27-Cys31, Cys46-Cys57, and Cys58-Cys63.

The protein belongs to the three-finger toxin family. Long-chain subfamily. Type II alpha-neurotoxin sub-subfamily. In terms of processing, neurotoxin 4.7.3 differs from 4.9.3 only in that Trp-26 has undergone partial photooxidation. In terms of tissue distribution, expressed by the venom gland.

The protein localises to the secreted. Its function is as follows. Binds with high affinity to muscular (alpha-1/CHRNA1) and neuronal (alpha-7/CHRNA7) nicotinic acetylcholine receptor (nAChR) and inhibits acetylcholine from binding to the receptor, thereby impairing neuromuscular and neuronal transmission. The chain is Alpha-elapitoxin-Dv2b from Dendroaspis viridis (Western green mamba).